A 410-amino-acid polypeptide reads, in one-letter code: Serine/threonine transporter SstT (410 aa).

Helical transmembrane passes span 15 to 35 (GSLVTQIMVGLVAGIALAWLS), 49 to 69 (FVNALKAVAPLLVLVLVISSI), 82 to 102 (PIVMLYLLSTFFAAVVAVVAS), 118 to 138 (IVPPSGILEVLHGLLMSMVTN), 142 to 162 (AVMKANYIGILVWAIGLGFAF), 190 to 210 (FAPVGIFGLVASILASTGFDA), 217 to 237 (LLGLLLGCMLLMALVFNPLLV), 299 to 319 (MAGASITITVLTLAAVHTLGI), 331 to 351 (LVASVCACGASGVAGGSLLLI), and 358 to 378 (FGIPNEIAMQVVAVGFIIGVL).

Belongs to the dicarboxylate/amino acid:cation symporter (DAACS) (TC 2.A.23) family.

The protein resides in the cell inner membrane. It catalyses the reaction L-serine(in) + Na(+)(in) = L-serine(out) + Na(+)(out). It carries out the reaction L-threonine(in) + Na(+)(in) = L-threonine(out) + Na(+)(out). Its function is as follows. Involved in the import of serine and threonine into the cell, with the concomitant import of sodium (symport system). In Erwinia tasmaniensis (strain DSM 17950 / CFBP 7177 / CIP 109463 / NCPPB 4357 / Et1/99), this protein is Serine/threonine transporter SstT.